A 246-amino-acid polypeptide reads, in one-letter code: Orotidine 5'-phosphate decarboxylase (246 aa).

Residues aspartate 22, lysine 44, aspartate 71–threonine 80, threonine 130, arginine 191, glutamine 201, glycine 221, and arginine 222 contribute to the substrate site. Residue lysine 73 is the Proton donor of the active site.

The protein belongs to the OMP decarboxylase family. Type 1 subfamily. Homodimer.

The enzyme catalyses orotidine 5'-phosphate + H(+) = UMP + CO2. Its pathway is pyrimidine metabolism; UMP biosynthesis via de novo pathway; UMP from orotate: step 2/2. Functionally, catalyzes the decarboxylation of orotidine 5'-monophosphate (OMP) to uridine 5'-monophosphate (UMP). The polypeptide is Orotidine 5'-phosphate decarboxylase (Neisseria gonorrhoeae (strain ATCC 700825 / FA 1090)).